A 212-amino-acid chain; its full sequence is Pyridoxine/pyridoxamine 5'-phosphate oxidase (212 aa).

Residues 7 to 10 (RREY) and K66 each bind substrate. FMN is bound by residues 61–66 (RIVLLK), 76–77 (YT), K83, and Q105. Substrate-binding residues include Y123, R127, and S131. Residues 140-141 (QS) and W185 contribute to the FMN site. 191 to 193 (RLH) contacts substrate. R195 serves as a coordination point for FMN.

Belongs to the pyridoxamine 5'-phosphate oxidase family. In terms of assembly, homodimer. Requires FMN as cofactor.

The enzyme catalyses pyridoxamine 5'-phosphate + O2 + H2O = pyridoxal 5'-phosphate + H2O2 + NH4(+). The catalysed reaction is pyridoxine 5'-phosphate + O2 = pyridoxal 5'-phosphate + H2O2. It participates in cofactor metabolism; pyridoxal 5'-phosphate salvage; pyridoxal 5'-phosphate from pyridoxamine 5'-phosphate: step 1/1. It functions in the pathway cofactor metabolism; pyridoxal 5'-phosphate salvage; pyridoxal 5'-phosphate from pyridoxine 5'-phosphate: step 1/1. Its function is as follows. Catalyzes the oxidation of either pyridoxine 5'-phosphate (PNP) or pyridoxamine 5'-phosphate (PMP) into pyridoxal 5'-phosphate (PLP). The chain is Pyridoxine/pyridoxamine 5'-phosphate oxidase from Idiomarina loihiensis (strain ATCC BAA-735 / DSM 15497 / L2-TR).